A 155-amino-acid chain; its full sequence is Ribonuclease H (155 aa).

Residues 4-145 (QQKVVEIYTD…ADALARKAIA (142 aa)) form the RNase H type-1 domain. D13, E51, D73, and D137 together coordinate Mg(2+).

Belongs to the RNase H family. As to quaternary structure, monomer. Mg(2+) is required as a cofactor.

The protein resides in the cytoplasm. The enzyme catalyses Endonucleolytic cleavage to 5'-phosphomonoester.. Endonuclease that specifically degrades the RNA of RNA-DNA hybrids. This Bartonella tribocorum (strain CIP 105476 / IBS 506) protein is Ribonuclease H.